Consider the following 192-residue polypeptide: Erythropoietin (192 aa).

The N-terminal stretch at 1-25 (MGARDCTPLLMLSFLLFPLGFPVLG) is a signal peptide. Cystine bridges form between cysteine 32-cysteine 187 and cysteine 54-cysteine 58. Asparagine 49 is a glycosylation site (N-linked (GlcNAc...) asparagine). N-linked (GlcNAc...) asparagine glycans are attached at residues asparagine 63 and asparagine 108.

Belongs to the EPO/TPO family. Produced by kidney or liver of adult mammals and by liver of fetal or neonatal mammals.

It is found in the secreted. Functionally, hormone involved in the regulation of erythrocyte proliferation and differentiation and the maintenance of a physiological level of circulating erythrocyte mass. Binds to EPOR leading to EPOR dimerization and JAK2 activation thereby activating specific downstream effectors, including STAT1 and STAT3. This chain is Erythropoietin (EPO), found in Bos taurus (Bovine).